The following is a 215-amino-acid chain: Pyridoxine/pyridoxamine 5'-phosphate oxidase (215 aa).

Residues 9–12 and K69 contribute to the substrate site; that span reads RREY. Residues 64–69, 79–80, K86, and Q108 each bind FMN; these read RILLLK and FT. Positions 126, 130, and 134 each coordinate substrate. FMN contacts are provided by residues 143–144 and W188; that span reads QS. 194 to 196 serves as a coordination point for substrate; sequence RLH. R198 contacts FMN.

It belongs to the pyridoxamine 5'-phosphate oxidase family. As to quaternary structure, homodimer. It depends on FMN as a cofactor.

It catalyses the reaction pyridoxamine 5'-phosphate + O2 + H2O = pyridoxal 5'-phosphate + H2O2 + NH4(+). The catalysed reaction is pyridoxine 5'-phosphate + O2 = pyridoxal 5'-phosphate + H2O2. It functions in the pathway cofactor metabolism; pyridoxal 5'-phosphate salvage; pyridoxal 5'-phosphate from pyridoxamine 5'-phosphate: step 1/1. The protein operates within cofactor metabolism; pyridoxal 5'-phosphate salvage; pyridoxal 5'-phosphate from pyridoxine 5'-phosphate: step 1/1. Catalyzes the oxidation of either pyridoxine 5'-phosphate (PNP) or pyridoxamine 5'-phosphate (PMP) into pyridoxal 5'-phosphate (PLP). The polypeptide is Pyridoxine/pyridoxamine 5'-phosphate oxidase (Pseudomonas paraeruginosa (strain DSM 24068 / PA7) (Pseudomonas aeruginosa (strain PA7))).